A 2009-amino-acid polypeptide reads, in one-letter code: Rootletin (2009 aa).

Coiled-coil stretches lie at residues 74-265 (EMAS…VTSD) and 346-438 (ASLH…LRLQ). Disordered regions lie at residues 462-519 (ALSD…CSDS), 575-594 (RDQTAASAQAQEDAQREAQR), 636-665 (ELKRQHNQLEDAQEDSVQEGARARRELERS), 1180-1225 (EAQR…ELRS), and 1448-1501 (GRVS…EAVR). Positions 463-484 (LSDTESGVQLSSSERTADTSDG) are enriched in polar residues. 2 coiled-coil regions span residues 550 to 1058 (LGSV…LLAE) and 1091 to 1439 (LEME…GLRS). The span at 577-586 (QTAASAQAQE) shows a compositional bias: low complexity. Over residues 656 to 665 (ARARRELERS) the composition is skewed to basic and acidic residues. Phosphoserine occurs at positions 1453, 1463, and 1469. Tyr1475 bears the Phosphotyrosine mark. Phosphoserine occurs at positions 1476, 1479, 1483, 1489, and 1568. The segment covering 1479–1494 (SQPPSPGLIASPAPPD) has biased composition (pro residues). Coiled coils occupy residues 1498-1697 (EAVR…GTLQ) and 1744-1998 (HLQK…RSSA). The disordered stretch occupies residues 1957 to 2009 (QVQTERTLEARERAHRQRVSGLEEQVSTLKAQLHQELRRSSASVSLPPGTPEK).

It belongs to the rootletin family. In terms of assembly, homomer. Interacts with KLC3, NEK2 and the N-terminus of CEP250. Interacts with CEP44. In terms of processing, phosphorylated by NEK2 which may regulate its association with centrosomes. In terms of tissue distribution, highest expression detected in photoreceptor cells of retina. Expressed at lower levels in brain, trachea and kidney. Detected in all major ciliated epithelia. During embryonic development, enriched along the apical domains of neuroepithelium in brain ventricular zone, in primordia of retinal pigment epithelia and in neural retina.

It localises to the cytoplasm. It is found in the cytoskeleton. The protein localises to the microtubule organizing center. Its subcellular location is the centrosome. The protein resides in the centriole. It localises to the cilium basal body. Functionally, major structural component of the ciliary rootlet, a cytoskeletal-like structure in ciliated cells which originates from the basal body at the proximal end of a cilium and extends proximally toward the cell nucleus. Furthermore, is required for the correct positioning of the cilium basal body relative to the cell nucleus, to allow for ciliogenesis. Contributes to centrosome cohesion before mitosis. This is Rootletin from Mus musculus (Mouse).